Here is a 489-residue protein sequence, read N- to C-terminus: Betaine aldehyde dehydrogenase (489 aa).

Residues T26 and D93 each coordinate K(+). NAD(+) is bound at residue 150 to 152 (GAW). Catalysis depends on K162, which acts as the Charge relay system. 176–179 (KPSE) contributes to the NAD(+) binding site. I180 provides a ligand contact to K(+). 229–232 (GVET) lines the NAD(+) pocket. Residue L245 participates in K(+) binding. E251 serves as the catalytic Proton acceptor. 3 residues coordinate NAD(+): G253, C285, and E386. Catalysis depends on C285, which acts as the Nucleophile. Cysteine sulfenic acid (-SOH) is present on C285. K(+) is bound by residues K456 and G459. E463 functions as the Charge relay system in the catalytic mechanism.

Belongs to the aldehyde dehydrogenase family. As to quaternary structure, dimer of dimers. Requires K(+) as cofactor.

It carries out the reaction betaine aldehyde + NAD(+) + H2O = glycine betaine + NADH + 2 H(+). The protein operates within amine and polyamine biosynthesis; betaine biosynthesis via choline pathway; betaine from betaine aldehyde: step 1/1. Functionally, involved in the biosynthesis of the osmoprotectant glycine betaine. Catalyzes the irreversible oxidation of betaine aldehyde to the corresponding acid. The polypeptide is Betaine aldehyde dehydrogenase (Paraburkholderia xenovorans (strain LB400)).